A 946-amino-acid chain; its full sequence is DNA primase (946 aa).

Residues 596–626 (RDTEEDEDGKEDKNNVPDNGVFQKTTSSVDT) are disordered. The span at 617–626 (FQKTTSSVDT) shows a compositional bias: polar residues. The segment at 881 to 920 (CLNYTHRNPQETVQVFIDLRTEHSYALWASLWSRCFTKKC) adopts a CHC2-type zinc-finger fold.

The protein belongs to the herpesviridae DNA primase family. In terms of assembly, associates with the helicase and the primase-associated factor to form the helicase-primase factor.

The protein resides in the host nucleus. In terms of biological role, essential component of the helicase/primase complex. Unwinds the DNA at the replication forks and generates single-stranded DNA for both leading and lagging strand synthesis. The primase initiates primer synthesis and thereby produces large amount of short RNA primers on the lagging strand that the polymerase elongates using dNTPs. This Human cytomegalovirus (strain AD169) (HHV-5) protein is DNA primase (UL70).